A 29-amino-acid polypeptide reads, in one-letter code: Protein 1.5 (29 aa).

The sequence is that of Protein 1.5 from Escherichia phage T7 (Bacteriophage T7).